Reading from the N-terminus, the 153-residue chain is Ribosomal RNA large subunit methyltransferase H (153 aa).

S-adenosyl-L-methionine contacts are provided by residues leucine 75, glycine 102, and 121 to 126 (LSKLTL).

It belongs to the RNA methyltransferase RlmH family. In terms of assembly, homodimer.

It localises to the cytoplasm. It catalyses the reaction pseudouridine(1915) in 23S rRNA + S-adenosyl-L-methionine = N(3)-methylpseudouridine(1915) in 23S rRNA + S-adenosyl-L-homocysteine + H(+). Functionally, specifically methylates the pseudouridine at position 1915 (m3Psi1915) in 23S rRNA. In Campylobacter jejuni (strain RM1221), this protein is Ribosomal RNA large subunit methyltransferase H.